The sequence spans 154 residues: Histidine-containing phosphotransfer protein 1 (154 aa).

The residue at position 1 (Met-1) is an N-acetylmethionine. Residues 38–143 (NPDFVSQVVT…FKLEQQIVAS (106 aa)) enclose the HPt domain. At His-79 the chain carries Phosphohistidine.

As to quaternary structure, interacts with the B-type response regulators ARR1, ARR2, ARR4 and ARR9. Binds to ETR1, AHK2, AHK3, AHK4, AHK5 and FBR12. In terms of processing, two-component system major event consists of a His-to-Asp phosphorelay between a sensor histidine kinase (HK) and a response regulator (RR). In plants, the His-to-Asp phosphorelay involves an additional intermediate named Histidine-containing phosphotransfer protein (HPt). This multistep phosphorelay consists of a His-Asp-His-Asp sequential transfer of a phosphate group between first a His and an Asp of the HK protein, followed by the transfer to a conserved His of the HPt protein and finally the transfer to an Asp in the receiver domain of the RR protein. In terms of tissue distribution, strongly expressed in roots.

It localises to the cytoplasm. It is found in the cytosol. Its subcellular location is the nucleus. Functionally, functions as a two-component phosphorelay mediators between cytokinin sensor histidine kinases and response regulator (B-type ARRs). Plays an important role in propagating cytokinin signal transduction through the multistep His-to-Asp phosphorelay. This chain is Histidine-containing phosphotransfer protein 1 (AHP1), found in Arabidopsis thaliana (Mouse-ear cress).